The following is a 908-amino-acid chain: Translation initiation factor IF-2 (908 aa).

2 disordered regions span residues 122 to 180 (PVVE…VDDA) and 203 to 267 (EKAR…AVKK). Residues 132-143 (VAAEPEVVEAPE) show a composition bias toward acidic residues. Positions 157-166 (EEPAAPAAPV) are enriched in low complexity. Basic and acidic residues predominate over residues 223–248 (AKEDARPTKHVEDLAKLKKPHDKKDE). A compositionally biased stretch (basic residues) spans 256–267 (KHNKKAGKAVKK). The 170-residue stretch at 409 to 578 (PRAPIVTVMG…ALQAELLELS (170 aa)) folds into the tr-type G domain. The G1 stretch occupies residues 418-425 (GHVDHGKT). 418 to 425 (GHVDHGKT) provides a ligand contact to GTP. The G2 stretch occupies residues 443 to 447 (GITQH). The interval 464-467 (DTPG) is G3. GTP contacts are provided by residues 464-468 (DTPGH) and 518-521 (NKMD). Residues 518-521 (NKMD) are G4. The interval 554 to 556 (SAH) is G5.

This sequence belongs to the TRAFAC class translation factor GTPase superfamily. Classic translation factor GTPase family. IF-2 subfamily.

It is found in the cytoplasm. Its function is as follows. One of the essential components for the initiation of protein synthesis. Protects formylmethionyl-tRNA from spontaneous hydrolysis and promotes its binding to the 30S ribosomal subunits. Also involved in the hydrolysis of GTP during the formation of the 70S ribosomal complex. This is Translation initiation factor IF-2 from Saccharophagus degradans (strain 2-40 / ATCC 43961 / DSM 17024).